The following is a 694-amino-acid chain: Putative bifunctional polynucleotide kinase/RNA ligase (694 aa).

Residues 1 to 385 (MLHVSRLLAN…TKQALNNKLA (385 aa)) are ligase domain. The segment at 394 to 694 (KQLLVLIGIS…FNVCRDYLEF (301 aa)) is bifunctional 5'-OH polynucleotide kinase/polynucleotide 3'-phosphatase. An ATP-binding site is contributed by 401–408 (GISGSGKS).

It catalyses the reaction a 5'-end dephospho-2'-deoxyribonucleoside-DNA + ATP = a 5'-end 5'-phospho-2'-deoxyribonucleoside-DNA + ADP + H(+). The enzyme catalyses ATP + (ribonucleotide)n-3'-hydroxyl + 5'-phospho-(ribonucleotide)m = (ribonucleotide)n+m + AMP + diphosphate.. Its function is as follows. Trifunctional enzyme that possesses a bifunctional polynucleotide kinase/phosphatase activity and an ATP-dependent RNA ligase activity. May therefore play a role to evade an RNA damage-based host response. The chain is Putative bifunctional polynucleotide kinase/RNA ligase (PNK/PNL) from Autographa californica nuclear polyhedrosis virus (AcMNPV).